We begin with the raw amino-acid sequence, 396 residues long: G-protein coupled receptor 84 (396 aa).

Residues M1–W26 lie on the Extracellular side of the membrane. N-linked (GlcNAc...) asparagine glycans are attached at residues N3 and N8. Residues G27–I47 traverse the membrane as a helical segment. Over Q48–L57 the chain is Cytoplasmic. A helical transmembrane segment spans residues L58–V78. At D79 to Q94 the chain is on the extracellular side. A helical membrane pass occupies residues I95–A115. Topologically, residues L116–T144 are cytoplasmic. A helical membrane pass occupies residues W145–V165. Residues C166 to T180 are Extracellular-facing. A helical transmembrane segment spans residues I181–I201. The Cytoplasmic segment spans residues H202 to M320. Phosphoserine is present on residues S221 and S224. The interval S243–S310 is disordered. T263 and T264 each carry phosphothreonine. A helical membrane pass occupies residues C321–L341. Residues D342–H352 lie on the Extracellular side of the membrane. The helical transmembrane segment at M353–M373 threads the bilayer. The Cytoplasmic portion of the chain corresponds to N374–H396.

It belongs to the G-protein coupled receptor 1 family. As to quaternary structure, interacts with ARRB2 and ARR3. Phosphorylated by a subset of GPR84-activating ligands. Constitutively phosphorylated at Ser-221 and Ser-224 in the absence of 2-HTP. By contrast, Thr-263 and Thr-264 are phosphorylated only following prior cell treatment with 2-HTP.

The protein resides in the cell membrane. Functionally, g protein-coupled receptor that responds endogenously to dietary fatty acids or nutrient, specifically medium-chain free fatty acid (FFA) with carbon chain lengths of C9 to C14. Capric acid (C10:0), undecanoic acid (C11:0) and lauric acid (C12:0) are the most potent agonists. In immune cells, functions as a pro-inflammatory receptor via 6-OAU and promotes the expression of pro-inflammatory mediators such as TNFalpha, IL-6 and IL-12B as well as stimulating chemotactic responses through activation of signaling mediators AKT, ERK and NF-kappa-B. In addition, triggers increased bacterial adhesion and phagocytosis in macrophages and regulates pro-inflammatory function via enhancing NLRP3 inflammasome activation. Also plays an important role in inflammation by modulating neutrophil functions. Mechanistically, promotes neutrophil chemotaxis, reactive oxygen species (ROS) production and degranulation via LYN-AKT/ERK pathway. To regulate ROS, communicates with the two formyl peptide receptors FPR2 and FPR1 to control the NADPH oxidase activity in neutrophils. This Bos taurus (Bovine) protein is G-protein coupled receptor 84 (GPR84).